A 199-amino-acid polypeptide reads, in one-letter code: Thymidylate kinase (199 aa).

Residue 7-14 coordinates ATP; that stretch reads GTEGVGKT.

Belongs to the thymidylate kinase family.

The catalysed reaction is dTMP + ATP = dTDP + ADP. Functionally, phosphorylation of dTMP to form dTDP in both de novo and salvage pathways of dTTP synthesis. The chain is Thymidylate kinase from Acinetobacter baumannii (strain ACICU).